The sequence spans 107 residues: MLTIEPPSATFPASGGSSTHTITSVNESRMAFKVKSSNNEHYRVRPVYGFVEARGKMKFEIIRLEGPVKDDKIMLQYAEVPADETDAQAPFKAGAQQGDVTILLKTN.

Residues 1 to 20 (MLTIEPPSATFPASGGSSTH) are disordered. Positions 1–107 (MLTIEPPSAT…GDVTILLKTN (107 aa)) constitute an MSP domain.

In terms of tissue distribution, expressed at higher level in testis.

The polypeptide is Sperm-specific class P protein 32 (ssp-32) (Caenorhabditis elegans).